Reading from the N-terminus, the 421-residue chain is UDP-N-acetylglucosamine 1-carboxyvinyltransferase 1 (421 aa).

22-23 (KN) contributes to the phosphoenolpyruvate binding site. Residue arginine 94 coordinates UDP-N-acetyl-alpha-D-glucosamine. Residue cysteine 118 is the Proton donor of the active site. Cysteine 118 bears the 2-(S-cysteinyl)pyruvic acid O-phosphothioketal mark. Residues 123 to 127 (RPIEL), aspartate 310, and valine 332 contribute to the UDP-N-acetyl-alpha-D-glucosamine site.

Belongs to the EPSP synthase family. MurA subfamily.

It localises to the cytoplasm. The catalysed reaction is phosphoenolpyruvate + UDP-N-acetyl-alpha-D-glucosamine = UDP-N-acetyl-3-O-(1-carboxyvinyl)-alpha-D-glucosamine + phosphate. Its pathway is cell wall biogenesis; peptidoglycan biosynthesis. Functionally, cell wall formation. Adds enolpyruvyl to UDP-N-acetylglucosamine. The sequence is that of UDP-N-acetylglucosamine 1-carboxyvinyltransferase 1 from Clostridium perfringens (strain 13 / Type A).